A 179-amino-acid polypeptide reads, in one-letter code: Ribosome maturation factor RimM (179 aa).

The region spanning 99–174 (EEDEYYFDQI…IMIVDLPEGL (76 aa)) is the PRC barrel domain.

This sequence belongs to the RimM family. In terms of assembly, binds ribosomal protein uS19.

The protein resides in the cytoplasm. An accessory protein needed during the final step in the assembly of 30S ribosomal subunit, possibly for assembly of the head region. Essential for efficient processing of 16S rRNA. May be needed both before and after RbfA during the maturation of 16S rRNA. It has affinity for free ribosomal 30S subunits but not for 70S ribosomes. This chain is Ribosome maturation factor RimM, found in Natranaerobius thermophilus (strain ATCC BAA-1301 / DSM 18059 / JW/NM-WN-LF).